The chain runs to 544 residues: Membrane protein insertase YidC (544 aa).

Transmembrane regions (helical) follow at residues 13–33, 321–341, 343–363, 409–429, 461–481, and 506–526; these read LSLF…SWML, LWYL…DVIP, WGLS…PLTF, LGGC…YSLV, LYFV…FTQL, and MPIM…IYWI.

It belongs to the OXA1/ALB3/YidC family. Type 1 subfamily. In terms of assembly, interacts with the Sec translocase complex via SecD. Specifically interacts with transmembrane segments of nascent integral membrane proteins during membrane integration.

It localises to the cell inner membrane. Required for the insertion and/or proper folding and/or complex formation of integral membrane proteins into the membrane. Involved in integration of membrane proteins that insert both dependently and independently of the Sec translocase complex, as well as at least some lipoproteins. Aids folding of multispanning membrane proteins. This chain is Membrane protein insertase YidC, found in Borreliella afzelii (strain PKo) (Borrelia afzelii).